The sequence spans 333 residues: Ferrochelatase (333 aa).

H202 and E284 together coordinate Fe cation.

This sequence belongs to the ferrochelatase family.

It is found in the cytoplasm. The catalysed reaction is heme b + 2 H(+) = protoporphyrin IX + Fe(2+). It participates in porphyrin-containing compound metabolism; protoheme biosynthesis; protoheme from protoporphyrin-IX: step 1/1. Catalyzes the ferrous insertion into protoporphyrin IX. The polypeptide is Ferrochelatase (Francisella tularensis subsp. novicida (strain U112)).